Reading from the N-terminus, the 379-residue chain is Chaperone protein DnaJ (379 aa).

The J domain occupies 4 to 69; it reads DLYETLGVQK…QKRAAYDRYG (66 aa). The segment at 137-215 adopts a CR-type zinc-finger fold; sequence GKTAQIRVPT…CHGQGRVVEE (79 aa). Zn(2+)-binding residues include Cys150, Cys153, Cys167, Cys170, Cys189, Cys192, Cys203, and Cys206. CXXCXGXG motif repeat units lie at residues 150–157, 167–174, 189–196, and 203–210; these read CDVCTGTG, CGTCQGTG, CPTCGGRG, and CTKCHGQG.

The protein belongs to the DnaJ family. Homodimer. Zn(2+) is required as a cofactor.

The protein localises to the cytoplasm. Participates actively in the response to hyperosmotic and heat shock by preventing the aggregation of stress-denatured proteins and by disaggregating proteins, also in an autonomous, DnaK-independent fashion. Unfolded proteins bind initially to DnaJ; upon interaction with the DnaJ-bound protein, DnaK hydrolyzes its bound ATP, resulting in the formation of a stable complex. GrpE releases ADP from DnaK; ATP binding to DnaK triggers the release of the substrate protein, thus completing the reaction cycle. Several rounds of ATP-dependent interactions between DnaJ, DnaK and GrpE are required for fully efficient folding. Also involved, together with DnaK and GrpE, in the DNA replication of plasmids through activation of initiation proteins. The chain is Chaperone protein DnaJ from Rhizobium meliloti (strain 1021) (Ensifer meliloti).